A 227-amino-acid polypeptide reads, in one-letter code: Cell wall mannoprotein CIS3 (227 aa).

Positions 1-21 are cleaved as a signal peptide; sequence MQFKNVALAASVAALSATASA. A propeptide spanning residues 22–64 is cleaved from the precursor; it reads EGYTPGEPWSTLTPTGSISCGAAEYTTTFGIAVQAITSSKAKR. A PIR1/2/3 repeat occupies 65–78; it reads DVISQIGDGQVQAT. S68 carries O-linked (Man) serine glycosylation. O-linked (Man) threonine glycosylation occurs at T78. Over residues 83 to 124 the composition is skewed to low complexity; that stretch reads AQATDSQAQATTTATPTSSEKISSSASKTSTNATSSSCATPS. The tract at residues 83–127 is disordered; it reads AQATDSQAQATTTATPTSSEKISSSASKTSTNATSSSCATPSLKD. Residues S105, S106, S107, and S109 are each glycosylated (O-linked (Man) serine). Residue T111 is glycosylated (O-linked (Man) threonine). O-linked (Man) serine glycosylation occurs at S112. A glycan (O-linked (Man) threonine) is linked at T113. N114 carries an N-linked (GlcNAc...) asparagine glycan. T116 carries an O-linked (Man) threonine glycan. O-linked (Man) serine glycans are attached at residues S117 and S118.

Belongs to the PIR protein family. Post-translationally, covalently linked to beta-1,3-glucan of the inner cell wall layer via an alkali-sensitive ester linkage between the gamma-carboxyl group of glutamic acid, arising from Gln-74 within the PIR1/2/3 repeat, and hydroxyl groups of glucoses of beta-1,3-glucan chains. Extensively O-mannosylated. Also N-glycosylated.

The protein localises to the secreted. The protein resides in the cell wall. In terms of biological role, component of the outer cell wall layer. Required for stability of the cell wall and for optimal growth. Required for resistance against several antifungal and cell wall-perturbing agents. This chain is Cell wall mannoprotein CIS3 (CIS3), found in Saccharomyces cerevisiae (strain ATCC 204508 / S288c) (Baker's yeast).